Reading from the N-terminus, the 123-residue chain is Protein Wnt-7a (123 aa).

A lipid anchor (O-palmitoleoyl serine; by PORCN) is attached at serine 1. Residues 33–61 are disordered linker; that stretch reads VEPVRASRNKRPTFLKIKKPLSYRKPMDT. Cysteines 89 and 104 form a disulfide. Asparagine 90 carries an N-linked (GlcNAc...) asparagine glycan.

This sequence belongs to the Wnt family. In terms of assembly, forms a soluble 1:1 complex with AFM; this prevents oligomerization and is required for prolonged biological activity. The complex with AFM may represent the physiological form in body fluids. Interacts with FZD5. Interacts with PORCN. Palmitoleoylation is required for efficient binding to frizzled receptors. Depalmitoleoylation leads to Wnt signaling pathway inhibition.

It localises to the secreted. The protein resides in the extracellular space. It is found in the extracellular matrix. Its function is as follows. Ligand for members of the frizzled family of seven transmembrane receptors that functions in the canonical Wnt/beta-catenin signaling pathway. Plays an important role in embryonic development, including dorsal versus ventral patterning during limb development, skeleton development and urogenital tract development. Required for central nervous system (CNS) angiogenesis and blood-brain barrier regulation. The polypeptide is Protein Wnt-7a (WNT7A) (Meleagris gallopavo (Wild turkey)).